A 301-amino-acid chain; its full sequence is tRNA-cytidine(32) 2-sulfurtransferase (301 aa).

The PP-loop motif motif lies at 55–60 (SGGKDS). [4Fe-4S] cluster is bound by residues Cys130, Cys133, and Cys221.

The protein belongs to the TtcA family. Homodimer. The cofactor is Mg(2+). Requires [4Fe-4S] cluster as cofactor.

It is found in the cytoplasm. It catalyses the reaction cytidine(32) in tRNA + S-sulfanyl-L-cysteinyl-[cysteine desulfurase] + AH2 + ATP = 2-thiocytidine(32) in tRNA + L-cysteinyl-[cysteine desulfurase] + A + AMP + diphosphate + H(+). Its pathway is tRNA modification. Functionally, catalyzes the ATP-dependent 2-thiolation of cytidine in position 32 of tRNA, to form 2-thiocytidine (s(2)C32). The sulfur atoms are provided by the cysteine/cysteine desulfurase (IscS) system. The protein is tRNA-cytidine(32) 2-sulfurtransferase of Acinetobacter baumannii (strain SDF).